The primary structure comprises 280 residues: Cytochrome c1 (280 aa).

The signal sequence occupies residues 1 to 21; that stretch reads MKKLLISAVSALVLGSGAALA. Positions 55, 58, 59, and 205 each coordinate heme c. A helical membrane pass occupies residues 249-267; it reads MGLVAVVMLGLLSVMLYLT.

In terms of assembly, the main subunits of complex b-c1 are: cytochrome b, cytochrome c1 and the Rieske protein. Post-translationally, binds 1 heme c group covalently per subunit.

It localises to the cell membrane. Functionally, component of the ubiquinol-cytochrome c reductase complex (complex III or cytochrome b-c1 complex), which is a respiratory chain that generates an electrochemical potential coupled to ATP synthesis. c1 functions as an electron donor to cytochrome c. The polypeptide is Cytochrome c1 (petC) (Rhodobacter capsulatus (Rhodopseudomonas capsulata)).